The following is a 351-amino-acid chain: GDSL esterase/lipase At3g14820 (351 aa).

Positions 1–22 are cleaved as a signal peptide; sequence MDLHLIGFLLWFFVVQVTTSSA. An N-linked (GlcNAc...) asparagine glycan is attached at Asn25. Ser39 functions as the Nucleophile in the catalytic mechanism. Residues Asp325 and His328 contribute to the active site.

Belongs to the 'GDSL' lipolytic enzyme family.

It localises to the secreted. In Arabidopsis thaliana (Mouse-ear cress), this protein is GDSL esterase/lipase At3g14820.